Consider the following 401-residue polypeptide: Imidazolonepropionase (401 aa).

Fe(3+) contacts are provided by His-66 and His-68. Zn(2+)-binding residues include His-66 and His-68. Residues Arg-75, Tyr-138, and His-171 each coordinate 4-imidazolone-5-propanoate. Tyr-138 is an N-formimidoyl-L-glutamate binding site. His-236 contributes to the Fe(3+) binding site. His-236 serves as a coordination point for Zn(2+). Gln-239 provides a ligand contact to 4-imidazolone-5-propanoate. Asp-311 is a binding site for Fe(3+). Asp-311 is a Zn(2+) binding site. N-formimidoyl-L-glutamate is bound by residues Asn-313 and Gly-315. Thr-316 contacts 4-imidazolone-5-propanoate.

This sequence belongs to the metallo-dependent hydrolases superfamily. HutI family. The cofactor is Zn(2+). Fe(3+) serves as cofactor.

It localises to the cytoplasm. It carries out the reaction 4-imidazolone-5-propanoate + H2O = N-formimidoyl-L-glutamate. It participates in amino-acid degradation; L-histidine degradation into L-glutamate; N-formimidoyl-L-glutamate from L-histidine: step 3/3. Its function is as follows. Catalyzes the hydrolytic cleavage of the carbon-nitrogen bond in imidazolone-5-propanoate to yield N-formimidoyl-L-glutamate. It is the third step in the universal histidine degradation pathway. The polypeptide is Imidazolonepropionase (Acinetobacter baumannii (strain ATCC 17978 / DSM 105126 / CIP 53.77 / LMG 1025 / NCDC KC755 / 5377)).